We begin with the raw amino-acid sequence, 367 residues long: MRWFLPWTLAAVTAAAASTVLATALSPAPTTMDFTPAPLEDTSSRPQFCKWPCECPPSPPRCPLGVSLITDGCECCKMCAQQLGDNCTEAAICDPHRGLYCDYSGDRPRYAIGVCAQVVGVGCVLDGVRYNNGQSFQPNCKYNCTCIDGAVGCTPLCLRVRPPRLWCPHPRRVSIPGHCCEQWVCEDDAKRPRKTAPRDTGAFDAVGEVEAWHRNCIAYTSPWSPCSTSCGLGVSTRISNVNAQCWPEQESRLCNLRPCDVDIHTLIKAGKKCLAVYQPEASMNFTLAGCISTRSYQPKYCGVCMDNRCCIPYKSKTIDVSFQCPDGLGFSRQVLWINACFCNLSCRNPNDIFADLESYPDFSEIAN.

The first 22 residues, 1–22 (MRWFLPWTLAAVTAAAASTVLA), serve as a signal peptide directing secretion. Residues 45 to 118 (RPQFCKWPCE…RYAIGVCAQV (74 aa)) enclose the IGFBP N-terminal domain. 4 cysteine pairs are disulfide-bonded: C49–C73, C53–C75, C55–C76, and C62–C79. The N-linked (GlcNAc...) asparagine glycan is linked to N86. Cystine bridges form between C87/C101 and C93/C115. One can recognise a VWFC domain in the interval 121-186 (VGCVLDGVRY…GHCCEQWVCE (66 aa)). N143 is a glycosylation site (N-linked (GlcNAc...) asparagine). One can recognise a TSP type-1 domain in the interval 215 to 260 (NCIAYTSPWSPCSTSCGLGVSTRISNVNAQCWPEQESRLCNLRPCD). Intrachain disulfides connect C273/C310, C290/C324, C301/C340, C304/C342, and C309/C346. The region spanning 273 to 347 (CLAVYQPEAS…NACFCNLSCR (75 aa)) is the CTCK domain. N284 carries N-linked (GlcNAc...) asparagine glycosylation. N343 carries N-linked (GlcNAc...) asparagine glycosylation.

This sequence belongs to the CCN family. As to expression, expressed in heart, kidney, lung, pancreas, placenta, ovary, small intestine and spleen. Isoform 2 is expressed predominantly in scirrhous gastric carcinoma and, weakly in placenta. Overexpression is associated with several cancers including breast cancer and colon tumors. Isoform 2 is overexpressed in scirrhous gastric carcinoma.

Its subcellular location is the secreted. In terms of biological role, downstream regulator in the Wnt/Frizzled-signaling pathway. Associated with cell survival. Attenuates p53-mediated apoptosis in response to DNA damage through activation of AKT kinase. Up-regulates the anti-apoptotic Bcl-X(L) protein. Adheres to skin and melanoma fibroblasts. In vitro binding to skin fibroblasts occurs through the proteoglycans, decorin and biglycan. This chain is CCN family member 4, found in Homo sapiens (Human).